The primary structure comprises 441 residues: Transcriptional regulatory protein ZraR (441 aa).

The 115-residue stretch at 7 to 121 folds into the Response regulatory domain; sequence DILVVDDDIS…NLQATLEKAL (115 aa). 4-aspartylphosphate is present on Asp56. The Sigma-54 factor interaction domain occupies 141 to 370; the sequence is MVGKSPAMQH…LENAVERAVV (230 aa). ATP is bound by residues Gly172, Thr173, Arg329, and Arg359. Residues 421–440 constitute a DNA-binding region (H-T-H motif); sequence KTEAARQLGITRKTLLAKLS.

In terms of assembly, monomer. Phosphorylated by ZraS.

It is found in the cytoplasm. Its activity is regulated as follows. Activity of the ZraS/ZraR two-component system is repressed by the zinc-bound form of ZraP, which probably interacts with the periplasmic region of ZraS. Functionally, part of the Zra signaling pathway, an envelope stress response (ESR) system composed of the periplasmic accessory protein ZraP, the histidine kinase ZraS and the transcriptional regulator ZraR. The ZraPSR system contributes to antibiotic resistance and is important for membrane integrity in the presence of membrane-targeting biocides. ZraR is a member of the two-component regulatory system ZraS/ZraR. When activated by ZraS, acts in conjunction with sigma-54 to regulate the expression of zraP in the presence of high Zn(2+) or Pb(2+) concentrations. Also positively autoregulates the expression of the zraSR operon. Binds to a region within the zraP-zraSR intergenic region that is characterized by two inverted repeats separated by a 14 bp spacer. In addition, controls a regulon of genes of diverse functions that may be critical to maintain envelope integrity and cell survival under stressful conditions. The system has no direct role in zinc or copper resistance. The polypeptide is Transcriptional regulatory protein ZraR (Escherichia coli (strain K12)).